The following is a 239-amino-acid chain: Octanoyltransferase (239 aa).

The region spanning 59-239 is the BPL/LPL catalytic domain; that stretch reads PFSPQAVWLL…KRRFKLNWEK (181 aa). Residues 101–108, 168–170, and 181–183 each bind substrate; these read RGGEVTHH, SIG, and GFS. The active-site Acyl-thioester intermediate is the Cys-199.

It belongs to the LipB family.

The protein localises to the cytoplasm. The catalysed reaction is octanoyl-[ACP] + L-lysyl-[protein] = N(6)-octanoyl-L-lysyl-[protein] + holo-[ACP] + H(+). It functions in the pathway protein modification; protein lipoylation via endogenous pathway; protein N(6)-(lipoyl)lysine from octanoyl-[acyl-carrier-protein]: step 1/2. Its function is as follows. Catalyzes the transfer of endogenously produced octanoic acid from octanoyl-acyl-carrier-protein onto the lipoyl domains of lipoate-dependent enzymes. Lipoyl-ACP can also act as a substrate although octanoyl-ACP is likely to be the physiological substrate. This chain is Octanoyltransferase, found in Prochlorococcus marinus (strain NATL2A).